Reading from the N-terminus, the 313-residue chain is Porphobilinogen deaminase (313 aa).

The residue at position 242 (cysteine 242) is an S-(dipyrrolylmethanemethyl)cysteine.

The protein belongs to the HMBS family. As to quaternary structure, monomer. Dipyrromethane serves as cofactor.

It catalyses the reaction 4 porphobilinogen + H2O = hydroxymethylbilane + 4 NH4(+). Its pathway is porphyrin-containing compound metabolism; protoporphyrin-IX biosynthesis; coproporphyrinogen-III from 5-aminolevulinate: step 2/4. Functionally, tetrapolymerization of the monopyrrole PBG into the hydroxymethylbilane pre-uroporphyrinogen in several discrete steps. The chain is Porphobilinogen deaminase from Klebsiella pneumoniae subsp. pneumoniae (strain ATCC 700721 / MGH 78578).